Here is a 155-residue protein sequence, read N- to C-terminus: Endoribonuclease YbeY (155 aa).

Residues H118, H122, and H128 each contribute to the Zn(2+) site.

The protein belongs to the endoribonuclease YbeY family. The cofactor is Zn(2+).

It localises to the cytoplasm. Its function is as follows. Single strand-specific metallo-endoribonuclease involved in late-stage 70S ribosome quality control and in maturation of the 3' terminus of the 16S rRNA. The polypeptide is Endoribonuclease YbeY (Bordetella petrii (strain ATCC BAA-461 / DSM 12804 / CCUG 43448)).